The following is a 520-amino-acid chain: Membrane-bound glycerophospholipid O-acyltransferase 2 (520 aa).

A run of 6 helical transmembrane segments spans residues 22 to 42, 61 to 81, 88 to 108, 184 to 204, 237 to 257, and 264 to 284; these read PIDQ…AIWF, TLLG…HFLV, CIMI…FALG, FMGI…FIEG, LLVC…LPVE, and FQAT…LLAA. Catalysis depends on residues Asn342 and His373. Transmembrane regions (helical) follow at residues 366 to 386, 416 to 436, and 444 to 464; these read FILS…FLTG, VITW…FVLL, and FYSS…LLLP.

This sequence belongs to the membrane-bound acyltransferase family. Expressed in neutrophils.

It is found in the endoplasmic reticulum membrane. The catalysed reaction is a 1-acyl-sn-glycero-3-phosphocholine + an acyl-CoA = a 1,2-diacyl-sn-glycero-3-phosphocholine + CoA. The enzyme catalyses a 1-acyl-sn-glycero-3-phosphoethanolamine + an acyl-CoA = a 1,2-diacyl-sn-glycero-3-phosphoethanolamine + CoA. It carries out the reaction a 1-acyl-sn-glycero-3-phosphate + an acyl-CoA = a 1,2-diacyl-sn-glycero-3-phosphate + CoA. It catalyses the reaction (9Z)-hexadecenoyl-CoA + 1-hexadecanoyl-sn-glycero-3-phosphocholine = 1-hexadecanoyl-2-(9Z-hexadecenoyl)-sn-glycero-3-phosphocholine + CoA. The catalysed reaction is 1-hexadecanoyl-sn-glycero-3-phosphoethanolamine + (9Z)-octadecenoyl-CoA = 1-hexadecanoyl-2-(9Z-octadecenoyl)-sn-glycero-3-phosphoethanolamine + CoA. The enzyme catalyses 1-hexadecanoyl-sn-glycero-3-phosphoethanolamine + (9Z)-hexadecenoyl-CoA = 1-hexadecanoyl-2-(9Z)-hexadecenoyl-sn-glycero-3-phosphoethanolamine + CoA. It carries out the reaction 1-(9Z-octadecenoyl)-sn-glycero-3-phospho-L-serine + hexadecanoyl-CoA = 1-(9Z)-octadecenoyl-2-hexadecanoyl-sn-glycero-3-phosphoserine + CoA. It catalyses the reaction (9Z,12Z)-octadecadienoyl-CoA + 1-hexadecanoyl-sn-glycero-3-phosphocholine = 1-hexadecanoyl-2-(9Z,12Z-octadecadienoyl)-sn-glycero-3-phosphocholine + CoA. The catalysed reaction is 1-hexadecanoyl-sn-glycero-3-phosphocholine + (9Z)-octadecenoyl-CoA = 1-hexadecanoyl-2-(9Z-octadecenoyl)-sn-glycero-3-phosphocholine + CoA. The enzyme catalyses 1-hexadecanoyl-sn-glycero-3-phosphate + (9Z)-hexadecenoyl-CoA = 1-hexadecanoyl-2-[(9Z)-hexadec-9-enoyl]-sn-glycero-3-phosphate + CoA. It carries out the reaction 1-hexadecanoyl-sn-glycero-3-phosphate + (9Z)-octadecenoyl-CoA = 1-hexadecanoyl-2-(9Z-octadecenoyl)-sn-glycero-3-phosphate + CoA. It catalyses the reaction a 1-O-(1Z-alkenyl)-sn-glycero-3-phosphocholine + (9Z)-octadecenoyl-CoA = 1-O-(1Z)-alkenyl-2-(9Z)-octadecenoyl-sn-glycero-3-phosphocholine + CoA. The catalysed reaction is a 1-O-(1Z-alkenyl)-sn-glycero-3-phosphoethanolamine + (9Z)-octadecenoyl-CoA = 1-O-(1Z)-alkenyl-2-(9Z)-octadecenoyl-sn-glycero-3-phosphoethanolamine + CoA. The enzyme catalyses 1-octadecanoyl-sn-glycero-3-phosphoethanolamine + (9Z)-octadecenoyl-CoA = 1-octadecanoyl-2-(9Z-octadecenoyl)-sn-glycero-3-phosphoethanolamine + CoA. It carries out the reaction 1-octadecanoyl-sn-glycero-3-phosphocholine + (9Z)-octadecenoyl-CoA = 1-octadecanoyl-2-(9Z-octadecenoyl)-sn-glycero-3-phosphocholine + CoA. It catalyses the reaction 1-(9Z-octadecenoyl)-sn-glycero-3-phosphoethanolamine + (9Z)-octadecenoyl-CoA = 1,2-di-(9Z-octadecenoyl)-sn-glycero-3-phosphoethanolamine + CoA. It functions in the pathway lipid metabolism; phospholipid metabolism. Partially inhibited by thimerosal. Functionally, acyltransferase which catalyzes the transfer of an acyl group from an acyl-CoA to a lysophospholipid leading to the production of a phospholipid and participates in the reacylation step of the phospholipid remodeling pathway also known as the Lands cycle. Catalyzes preferentially the acylation of lysophosphatidylethanolamine (1-acyl-sn-glycero-3-phosphoethanolamine or LPE) and lysophosphatidic acid (LPA) and to a lesser extend lysophosphatidylcholine (LPC) and lysophosphatidylserine (LPS). Prefers oleoyl-CoA as the acyl donor. May be involved in chondrocyte differentiation. The polypeptide is Membrane-bound glycerophospholipid O-acyltransferase 2 (Homo sapiens (Human)).